The sequence spans 25 residues: Xenoposin precursor fragment BM2 (25 aa).

In terms of tissue distribution, expressed by the skin glands.

The protein localises to the secreted. Functionally, antimicrobial peptide. This Xenopus boumbaensis (Mawa clawed frog) protein is Xenoposin precursor fragment BM2.